The primary structure comprises 877 residues: Dolichyl-phosphate-mannose--protein mannosyltransferase 1 (877 aa).

Residue asparagine 83 is glycosylated (N-linked (GlcNAc...) asparagine). 2 helical membrane passes run 109 to 129 (FFMDVHPPLAKMLFGAVGAIG) and 150 to 170 (YIFMRQFPALLGVGTVILCYL). Asparagine 195 is a glycosylation site (N-linked (GlcNAc...) asparagine). Helical transmembrane passes span 196–216 (VTISRYILLDSPLIFFIAAAI), 226–246 (IPFTFGWYRSLLATGIALGLA), 252–272 (VGLFTVAWVGFLCIYQLWFLI), and 291–311 (IILLGVPIALYLGFFAIHFQL). Residues 340–394 (TEQVGLGSVVTIRHVDTQGGYLHSHEHFYQTGSKQQQITLYPHLDSNNKWLIEPY) form the MIR 1 domain. Residues asparagine 395 and asparagine 400 are each glycosylated (N-linked (GlcNAc...) asparagine). MIR domains are found at residues 403–462 (FVPL…VEIV) and 472–528 (QTFV…IETN). Transmembrane regions (helical) follow at residues 604 to 624 (TWWAATLSIITFGTYVLVTVF), 643 to 663 (VQTFSYVLGWALHYLPFFIMG), 666 to 686 (LFLHHYLPALYFGILALGHFF), and 700 to 720 (FQQVAFVLVGLFSILSLVFYV). N-linked (GlcNAc...) asparagine glycosylation occurs at asparagine 721. The interval 778-877 (VVEAKQTPKA…EDESVHQVQQ (100 aa)) is disordered. Composition is skewed to basic and acidic residues over residues 783–799 (QTPKAEPKLAKQDDHIE), 807–816 (VEEKEVKEEV), and 847–857 (NDEKSVEEKQQ).

The protein belongs to the glycosyltransferase 39 family. In terms of assembly, PMT1 and PMT2 form a functional heterodimer.

Its subcellular location is the endoplasmic reticulum membrane. It carries out the reaction a di-trans,poly-cis-dolichyl beta-D-mannosyl phosphate + L-seryl-[protein] = 3-O-(alpha-D-mannosyl)-L-seryl-[protein] + a di-trans,poly-cis-dolichyl phosphate + H(+). The catalysed reaction is a di-trans,poly-cis-dolichyl beta-D-mannosyl phosphate + L-threonyl-[protein] = 3-O-(alpha-D-mannosyl)-L-threonyl-[protein] + a di-trans,poly-cis-dolichyl phosphate + H(+). The protein operates within protein modification; protein glycosylation. Its function is as follows. Protein mannosyltransferase (PMT) involved in hyphal growth and drug sensitivity. Transfers mannose from Dol-P-mannose to Ser or Thr residues on proteins. PMT1, PMT2 and PMT4 account for most of the protein-O-glycosylation activity, while PMT5 and PMT6 may specifically modulate a much narrower spectrum of target proteins. Accounts for the O-glycosylation of the cell wall proteins KRE9, PIR2, RHD3, and ALS1, as well as the SEC20 t-SNARE component. O-glycosylation of SEC20 is essential for its stability. Required for filamentation and early phases of biofilm formation. The protein is Dolichyl-phosphate-mannose--protein mannosyltransferase 1 (PMT1) of Candida albicans (strain SC5314 / ATCC MYA-2876) (Yeast).